Reading from the N-terminus, the 620-residue chain is MIERLILFNFQSDKNTKHTRVRNMLLRRAAAALPARKTPLHCYRRLGGSYRALSGSLLLRDEEKRLPHRVQDERDEAKADTDLAADGDSAATKPWYLNIVERPAQNMPLHQQEIVFPANSPKSLETIATFLRDKLGLSDVLIFDLRDSQDEQVTAASKISDFMVMATAKSGRHGHKSFIELNTLLKQEFKTVGQVEGNISANELRRRQKRLARHTNLSKSMGSRTATTRSGSNLESWYMIDCRLDNIFVNILTENKRQDLNLEELYAPPDQKHLYRREAPAEDVAPKEGDDNVLAGLKRLAARNQRRYFTTVPARVQIIDALSRQDFDLVLNVVSASKMDSLDILKAANQTLRSMPYGVKIEGESWITFLDEVWPLAPYSQDFWSTRLELFKLLNCAAPGQVNVDRVFTGYLKFKLASGESLTKSDLVEFLQLVETNLSENSHVDYEDLVAKNKCVLEALKLYKGLDPRLILDSEVMCLLLSTLSITQSGSTSTLRAFYEMVEFASREFSQEPPVPVTATVLRILADKQDYARILRFWEKSIASSPEKDHRPWPLFLDTVASTGDQEFAKKVIRDGHLLWIKRNGVKASPELREAIERLFAVADPAEVAFKDVKEFLTVE.

The span at 66 to 81 (LPHRVQDERDEAKADT) shows a compositional bias: basic and acidic residues. A disordered region spans residues 66–85 (LPHRVQDERDEAKADTDLAA).

The protein belongs to the ATP25 family.

The protein localises to the mitochondrion inner membrane. In terms of biological role, probable mitochondrial mRNA stabilization factor. In Lachancea thermotolerans (strain ATCC 56472 / CBS 6340 / NRRL Y-8284) (Yeast), this protein is ATPase synthesis protein 25, mitochondrial (ATP25).